A 111-amino-acid polypeptide reads, in one-letter code: MICOS complex subunit MIC13 (111 aa).

The helical transmembrane segment at 8–26 (VVKFATKVTIAGGALYVAY) threads the bilayer.

This sequence belongs to the MICOS complex subunit Mic13 family. Component of the mitochondrial contact site and cristae organizing system (MICOS) complex.

It is found in the mitochondrion inner membrane. Component of the MICOS complex, a large protein complex of the mitochondrial inner membrane that plays crucial roles in the maintenance of crista junctions, inner membrane architecture, and formation of contact sites to the outer membrane. Constituent of mature MICOS complex, it is required for the formation of cristae junction (CJ) and maintenance of cristae morphology. Required for the incorporation of MIC10 into the MICOS complex. The polypeptide is MICOS complex subunit MIC13 (Danio rerio (Zebrafish)).